Reading from the N-terminus, the 161-residue chain is Nucleotide-binding protein Gmet_3206 (161 aa).

This sequence belongs to the YajQ family.

Functionally, nucleotide-binding protein. The chain is Nucleotide-binding protein Gmet_3206 from Geobacter metallireducens (strain ATCC 53774 / DSM 7210 / GS-15).